Consider the following 259-residue polypeptide: Cytosolic Fe-S cluster assembly factor Nubp2 homolog (259 aa).

14–21 contacts ATP; that stretch reads GKGGVGKS. 2 residues coordinate [4Fe-4S] cluster: Cys188 and Cys191.

It belongs to the Mrp/NBP35 ATP-binding proteins family. NUBP2/CFD1 subfamily. Heterotetramer of 2 Nubp1 and 2 Nubp2 chains. The cofactor is [4Fe-4S] cluster.

The protein localises to the cytoplasm. Functionally, component of the cytosolic iron-sulfur (Fe/S) protein assembly (CIA) machinery. Required for maturation of extramitochondrial Fe-S proteins. The Nubp1-Nubp2 heterotetramer forms a Fe-S scaffold complex, mediating the de novo assembly of an Fe-S cluster and its transfer to target apoproteins. The polypeptide is Cytosolic Fe-S cluster assembly factor Nubp2 homolog (Aedes aegypti (Yellowfever mosquito)).